Reading from the N-terminus, the 289-residue chain is uncharacterized protein (289 aa).

The first 23 residues, 1-23, serve as a signal peptide directing secretion; sequence MIKNYKLLLFTTFTLFFITFVSG. N-linked (GlcNAc...) asparagine glycans are attached at residues N74, N101, N132, and N285.

It localises to the secreted. This is an uncharacterized protein from Dictyostelium discoideum (Social amoeba).